The primary structure comprises 289 residues: Acetyl-coenzyme A carboxylase carboxyl transferase subunit beta (289 aa).

In terms of domain architecture, CoA carboxyltransferase N-terminal spans 34–289 (MWVKCNKCGE…KLINMHQNSF (256 aa)). Zn(2+)-binding residues include Cys-38, Cys-41, Cys-57, and Cys-60. The segment at 38–60 (CNKCGEILYQNDLEKNYMVCNLC) adopts a C4-type zinc-finger fold.

Belongs to the AccD/PCCB family. As to quaternary structure, acetyl-CoA carboxylase is a heterohexamer composed of biotin carboxyl carrier protein (AccB), biotin carboxylase (AccC) and two subunits each of ACCase subunit alpha (AccA) and ACCase subunit beta (AccD). It depends on Zn(2+) as a cofactor.

Its subcellular location is the cytoplasm. The catalysed reaction is N(6)-carboxybiotinyl-L-lysyl-[protein] + acetyl-CoA = N(6)-biotinyl-L-lysyl-[protein] + malonyl-CoA. It participates in lipid metabolism; malonyl-CoA biosynthesis; malonyl-CoA from acetyl-CoA: step 1/1. Functionally, component of the acetyl coenzyme A carboxylase (ACC) complex. Biotin carboxylase (BC) catalyzes the carboxylation of biotin on its carrier protein (BCCP) and then the CO(2) group is transferred by the transcarboxylase to acetyl-CoA to form malonyl-CoA. In Clostridium botulinum (strain Okra / Type B1), this protein is Acetyl-coenzyme A carboxylase carboxyl transferase subunit beta.